Consider the following 198-residue polypeptide: Small ribosomal subunit protein eS1 (198 aa).

It belongs to the eukaryotic ribosomal protein eS1 family.

This Nanoarchaeum equitans (strain Kin4-M) protein is Small ribosomal subunit protein eS1.